We begin with the raw amino-acid sequence, 378 residues long: uncharacterized protein (378 aa).

It belongs to the IIV-6 329R family.

This is an uncharacterized protein from Acheta domesticus (House cricket).